A 291-amino-acid polypeptide reads, in one-letter code: Undecaprenyl-diphosphatase (291 aa).

A run of 8 helical transmembrane segments spans residues 1-21 (MIII…LTEF), 48-68 (SAFT…AWVF), 100-120 (LHVL…DDFI), 124-144 (LFSV…MIIA), 160-180 (INYV…WPGF), 201-221 (SDFT…LSLV), 230-250 (AHIP…LIAI), and 270-290 (IVLV…QGIS).

The protein belongs to the UppP family.

The protein resides in the cell membrane. The catalysed reaction is di-trans,octa-cis-undecaprenyl diphosphate + H2O = di-trans,octa-cis-undecaprenyl phosphate + phosphate + H(+). Its function is as follows. Catalyzes the dephosphorylation of undecaprenyl diphosphate (UPP). Confers resistance to bacitracin. The protein is Undecaprenyl-diphosphatase of Staphylococcus haemolyticus (strain JCSC1435).